We begin with the raw amino-acid sequence, 285 residues long: Type II restriction enzyme Cfr10I (285 aa).

Residues Asp-134 and Glu-204 each coordinate Mg(2+).

Homodimer. Mg(2+) serves as cofactor.

It carries out the reaction Endonucleolytic cleavage of DNA to give specific double-stranded fragments with terminal 5'-phosphates.. Functionally, an F and P subtype restriction enzyme that recognizes the double-stranded sequence 5'-RCCGGY-3' and cleaves after R-1. In Citrobacter freundii, this protein is Type II restriction enzyme Cfr10I (cfr10IR).